We begin with the raw amino-acid sequence, 522 residues long: GMP synthase [glutamine-hydrolyzing] (522 aa).

In terms of domain architecture, Glutamine amidotransferase type-1 spans 5 to 204 (YILIIDFGSQ…VKNICNYTNV (200 aa)). Catalysis depends on C82, which acts as the Nucleophile. Catalysis depends on residues H178 and E180. The 193-residue stretch at 205–397 (IKYSLSIRKI…IGIPKEIIFR (193 aa)) folds into the GMPS ATP-PPase domain. 232–238 (SGGIDSF) lines the ATP pocket.

In terms of assembly, homodimer.

It carries out the reaction XMP + L-glutamine + ATP + H2O = GMP + L-glutamate + AMP + diphosphate + 2 H(+). It participates in purine metabolism; GMP biosynthesis; GMP from XMP (L-Gln route): step 1/1. In terms of biological role, catalyzes the synthesis of GMP from XMP. The sequence is that of GMP synthase [glutamine-hydrolyzing] from Wigglesworthia glossinidia brevipalpis.